The following is a 179-amino-acid chain: Natural killer cells antigen CD94 (179 aa).

Topologically, residues Met1–Trp10 are cytoplasmic. The helical; Signal-anchor for type II membrane protein transmembrane segment at Leu11–Leu31 threads the bilayer. Topologically, residues Lys32–Ile179 are extracellular. 2 cysteine pairs are disulfide-bonded: Cys58–Cys70 and Cys61–Cys72. The region spanning Tyr68–Lys175 is the C-type lectin domain. N-linked (GlcNAc...) asparagine glycans are attached at residues Asn83 and Asn132. 2 disulfide bridges follow: Cys89–Cys174 and Cys152–Cys166.

In terms of assembly, can form disulfide-bonded heterodimer with NKG2 family members KLRC1 and KLRC2. KLRD1-KLRC1 heterodimer interacts with peptide-bound MHC-E-B2M heterotrimeric complex. KLRD1 plays a prominent role in directly interacting with MHC-E. KLRD1-KLRC1 interacts with much higher affinity with peptide-bound MHC-E-B2M than KLRD1-KLRC2. Interacts with the adapter protein TYROBP/DAP12; this interaction is required for cell surface expression and cell activation. As to expression, natural killer cells.

It is found in the cell membrane. In terms of biological role, immune receptor involved in self-nonself discrimination. In complex with KLRC1 or KLRC2 on cytotoxic and regulatory lymphocyte subsets, recognizes non-classical major histocompatibility (MHC) class Ib molecule MHC-E loaded with self-peptides derived from the signal sequence of classical MHC class Ia and non-classical MHC class Ib molecules. Enables cytotoxic cells to monitor the expression of MHC class I molecules in healthy cells and to tolerate self. Primarily functions as a ligand binding subunit as it lacks the capacity to signal. KLRD1-KLRC1 acts as an immune inhibitory receptor. Key inhibitory receptor on natural killer (NK) cells that regulates their activation and effector functions. Dominantly counteracts T cell receptor signaling on a subset of memory/effector CD8-positive T cells as part of an antigen-driven response to avoid autoimmunity. On intraepithelial CD8-positive gamma-delta regulatory T cells triggers TGFB1 secretion, which in turn limits the cytotoxic programming of intraepithelial CD8-positive alpha-beta T cells, distinguishing harmless from pathogenic antigens. In MHC-E-rich tumor microenvironment, acts as an immune inhibitory checkpoint and may contribute to progressive loss of effector functions of NK cells and tumor-specific T cells, a state known as cell exhaustion. Upon MHC-E-peptide binding, transmits intracellular signals through KLRC1 immunoreceptor tyrosine-based inhibition motifs (ITIMs) by recruiting INPP5D/SHIP-1 and INPPL1/SHIP-2 tyrosine phosphatases to ITIMs, and ultimately opposing signals transmitted by activating receptors through dephosphorylation of proximal signaling molecules. Functionally, KLRD1-KLRC2 acts as an immune activating receptor. On cytotoxic lymphocyte subsets recognizes MHC-E loaded with signal sequence-derived peptides from non-classical MHC class Ib MHC-G molecules, likely playing a role in the generation and effector functions of adaptive NK cells and in maternal-fetal tolerance during pregnancy. Regulates the effector functions of terminally differentiated cytotoxic lymphocyte subsets, and in particular may play a role in adaptive NK cell response to viral infection. Upon MHC-E-peptide binding, transmits intracellular signals via the adapter protein TYROBP/DAP12, triggering the phosphorylation of proximal signaling molecules and cell activation. The sequence is that of Natural killer cells antigen CD94 (KLRD1) from Pongo pygmaeus (Bornean orangutan).